The primary structure comprises 148 residues: Hemoglobin subunit beta-1 (148 aa).

Positions 3-148 constitute a Globin domain; it reads EWTDAERTAI…VVSALCRQYH (146 aa). Positions 64 and 93 each coordinate heme b.

As to quaternary structure, heterotetramer of two alpha chains and two beta chains. Red blood cells.

In terms of biological role, involved in oxygen transport from gills to the various peripheral tissues. This chain is Hemoglobin subunit beta-1 (ba1), found in Danio rerio (Zebrafish).